Here is a 423-residue protein sequence, read N- to C-terminus: COUP transcription factor 1 (423 aa).

The interval 1 to 81 (MAMVVSSWRD…QGPPGSGQSQ (81 aa)) is disordered. A compositionally biased stretch (low complexity) spans 39 to 67 (EQQQQAGSGAPHTPQTPGQPGAPATPGTA). Residues 83–158 (HIECVVCGDK…VGMRREAVQR (76 aa)) constitute a DNA-binding region (nuclear receptor). 2 NR C4-type zinc fingers span residues 86–106 (CVVC…CEGC) and 122–146 (CRAN…LKKC). An NR LBD domain is found at 184–410 (YLSGYISLLL…TLIRDMLLSG (227 aa)).

Belongs to the nuclear hormone receptor family. NR2 subfamily. In terms of assembly, binds DNA as dimer; homodimer and probable heterodimer with NR2F6. Interacts with GTF2B; this interaction is direct. Interacts with COPS2.

Its subcellular location is the nucleus. In terms of biological role, coup (chicken ovalbumin upstream promoter) transcription factor binds to the ovalbumin promoter and, in conjunction with another protein (S300-II) stimulates initiation of transcription. Binds to both direct repeats and palindromes of the 5'-AGGTCA-3' motif. Represses transcriptional activity of LHCG. This chain is COUP transcription factor 1 (NR2F1), found in Homo sapiens (Human).